The primary structure comprises 218 residues: Small ribosomal subunit protein uS5 (218 aa).

The tract at residues Met-1–His-49 is disordered. The segment covering Gly-26–His-49 has biased composition (basic and acidic residues). An S5 DRBM domain is found at His-49–Val-112.

Belongs to the universal ribosomal protein uS5 family. Part of the 30S ribosomal subunit. Contacts proteins S4 and S8.

Its function is as follows. With S4 and S12 plays an important role in translational accuracy. Located at the back of the 30S subunit body where it stabilizes the conformation of the head with respect to the body. The chain is Small ribosomal subunit protein uS5 from Rhodococcus jostii (strain RHA1).